The following is a 106-amino-acid chain: MGMNQQRLTQVILAPIVSEKSNVLAEKRNQMTFKVLANAAKPEIKAAVELLFGVQVASVTTVTTKGKTKRFGRTLGRRSDVKKAYVSLAAGQELDLEAAAAAADKE.

It belongs to the universal ribosomal protein uL23 family. As to quaternary structure, part of the 50S ribosomal subunit. Contacts protein L29, and trigger factor when it is bound to the ribosome.

Functionally, one of the early assembly proteins it binds 23S rRNA. One of the proteins that surrounds the polypeptide exit tunnel on the outside of the ribosome. Forms the main docking site for trigger factor binding to the ribosome. The protein is Large ribosomal subunit protein uL23 of Neisseria meningitidis serogroup C / serotype 2a (strain ATCC 700532 / DSM 15464 / FAM18).